Reading from the N-terminus, the 37-residue chain is Large ribosomal subunit protein bL36 (37 aa).

This sequence belongs to the bacterial ribosomal protein bL36 family.

In Bacillus anthracis (strain A0248), this protein is Large ribosomal subunit protein bL36.